Reading from the N-terminus, the 739-residue chain is MSGFPFGQSNSVGGFSFGSSSATNSSSASSTTSPLSFSFNQSSNPSSTGFGFGSSVSSTPASSTTPSFGFGASSTPSFGFGSSASSSTPSFGFGSSASVTPASTTPSFGFGTAASSSAPAPSLFGSSTTNASSAAPGSSPFGFVTSSASSTATPSSSLFGAPASSAATPSSSPFGAAPASGSTPLFGSSPSLFSAPSSASASNSSLFGASSSAATSTSPLFGAPSSATGATPSFSVASSAPGSSSSIFGATGSSPSFSVASSASGSSPSIFGATGSSPFFGSSSSAGSTPSLFASSSSGATTSSPSPFGVSTFNSSSTSNTSNASASPFSASTGFSFLKSTASSTTSSTTPSAPPQTASSSSSFSFGTSANSGFNLSTGSSAAPASSTSGAVFSIATTTTTSSSTPAATSAPASSAPASTMAFPSFGVTSSATNTTPASSAATFSTTGFGLASSTPATGSTNSFTGFAVPKTSTPASSSQPQTTSPAFSFSLPSSTSTTAPATSSATTTQTTLVVPSSSGTSTAVAPVAGSPKLPSEITGKTVEEIIKEWNTELQERTGRFRKQANAIAEWDKRILQNRDVLLRLEIEVAKVVETQSSLERQLELIETHQQEVDKALQSMEEEAERIYNDERKSLLDDEAASTRDAMYEQSELVERELEHMTEQIRSIIQSVNANQGGELEAIDGMSPLDVVVRILNNQLSSLMWIDEKAEEFSSRIQKIALQGSGGDRELMAPKHWMS.

A run of 19 repeats spans residues 6 to 7 (FG), 17 to 18 (FG), 50 to 51 (FG), 52 to 53 (FG), 68 to 69 (FG), 70 to 71 (FG), 78 to 79 (FG), 80 to 81 (FG), 91 to 92 (FG), 93 to 94 (FG), 108 to 109 (FG), 110 to 111 (FG), 124 to 125 (FG), 141 to 142 (FG), 159 to 160 (FG), 174 to 175 (FG), 186 to 187 (FG), 207 to 208 (FG), and 221 to 222 (FG). A 26 X 2 AA repeats of F-G region spans residues 6–450 (FGQSNSVGGF…AATFSTTGFG (445 aa)). The tract at residues 18–67 (GSSSATNSSSASSTTSPLSFSFNQSSNPSSTGFGFGSSVSSTPASSTTPS) is disordered. Residues 79-218 (GFGSSASSST…ASSSAATSTS (140 aa)) show a composition bias toward low complexity. The interval 79–245 (GFGSSASSST…VASSAPGSSS (167 aa)) is disordered. The segment covering 232 to 245 (PSFSVASSAPGSSS) has biased composition (low complexity). Repeat copies occupy residues 248–249 (FG), 271–272 (FG), 280–281 (FG), 308–309 (FG), and 366–367 (FG). Disordered stretches follow at residues 281-329 (GSSS…ASPF), 341-366 (TASS…SFSF), and 399-418 (TTTS…SAPA). Repeat copies occupy residues 426–427 (FG) and 449–450 (FG). The segment at 471-533 (KTSTPASSSQ…AVAPVAGSPK (63 aa)) is disordered. Positions 472 to 519 (TSTPASSSQPQTTSPAFSFSLPSSTSTTAPATSSATTTQTTLVVPSSS) are enriched in low complexity. Residues 584-674 (RLEIEVAKVV…IRSIIQSVNA (91 aa)) are a coiled coil.

The protein belongs to the nucleoporin NSP1/NUP62 family. In terms of assembly, part of the nuclear pore complex (NPC). The NPC has an eight-fold symmetrical structure comprising a central transport channel and two rings, the cytoplasmic and nuclear rings, to which eight filaments are attached. The cytoplasmic filaments have loose ends, while the nuclear filaments are joined in a distal ring, forming a nuclear basket. NPCs are highly dynamic in configuration and composition, and can be devided in 3 subcomplexes, the NUP62 subcomplex, the NUP107-160 subcomplex and the NUP93 subcomplex, containing approximately 30 different nucleoporin proteins. Interacts with NUP58 and the importin KPNB1.

Its subcellular location is the nucleus envelope. It localises to the nucleus. The protein resides in the nuclear pore complex. The polypeptide is Nuclear pore complex protein NUP62 (Arabidopsis thaliana (Mouse-ear cress)).